We begin with the raw amino-acid sequence, 158 residues long: NAD(P)H-quinone oxidoreductase subunit N (158 aa).

Belongs to the complex I NdhN subunit family. In terms of assembly, NDH-1 can be composed of about 15 different subunits; different subcomplexes with different compositions have been identified which probably have different functions.

It is found in the cellular thylakoid membrane. The catalysed reaction is a plastoquinone + NADH + (n+1) H(+)(in) = a plastoquinol + NAD(+) + n H(+)(out). It carries out the reaction a plastoquinone + NADPH + (n+1) H(+)(in) = a plastoquinol + NADP(+) + n H(+)(out). Its function is as follows. NDH-1 shuttles electrons from an unknown electron donor, via FMN and iron-sulfur (Fe-S) centers, to quinones in the respiratory and/or the photosynthetic chain. The immediate electron acceptor for the enzyme in this species is believed to be plastoquinone. Couples the redox reaction to proton translocation, and thus conserves the redox energy in a proton gradient. Cyanobacterial NDH-1 also plays a role in inorganic carbon-concentration. This chain is NAD(P)H-quinone oxidoreductase subunit N, found in Nostoc punctiforme (strain ATCC 29133 / PCC 73102).